The sequence spans 110 residues: Keratin, type I cytoskeletal 19 (110 aa).

The segment at 1 to 8 is head; it reads FGSGGVFR. Serine 3 is modified (phosphoserine). Residues 7–110 form the IF rod domain; sequence FRITMQNLND…KLEQEIATYR (104 aa). Arginine 8 bears the Omega-N-methylarginine mark. A coil 1A region spans residues 9 to 42; the sequence is ITMQNLNDRLASYLDKVRALEQANGELEVKIRDW. Residues 43 to 45 are linker 1; sequence YQK. The interval 46-83 is coil 1B; it reads IVLQIDNARTKFETEQALRVLDELTLARKNHEEEISAL. A coil 2 region spans residues 85-110; it reads ADTERQNQEYQQLMDIKLEQEIATYR. The tract at residues 85 to 110 is necessary for interaction with PNN; the sequence is ADTERQNQEYQQLMDIKLEQEIATYR.

This sequence belongs to the intermediate filament family. As to quaternary structure, heterotetramer of two type I and two type II keratins. Interacts with PNN and the actin-binding domain of DMD.

Functionally, involved in the organization of myofibers. Together with KRT8, helps to link the contractile apparatus to dystrophin at the costameres of striated muscle. This is Keratin, type I cytoskeletal 19 from Mesocricetus auratus (Golden hamster).